The following is a 343-amino-acid chain: Selenide, water dikinase (343 aa).

The active site involves selenocysteine 13. A non-standard amino acid (selenocysteine) is located at residue selenocysteine 13. ATP-binding positions include lysine 16 and 44-46 (TAD). Mg(2+) is bound at residue aspartate 47. ATP is bound by residues aspartate 64, aspartate 87, and 135 to 137 (GHT). Residue aspartate 87 participates in Mg(2+) binding. Aspartate 223 is a binding site for Mg(2+).

It belongs to the selenophosphate synthase 1 family. Class I subfamily. In terms of assembly, homodimer. Mg(2+) serves as cofactor.

The enzyme catalyses hydrogenselenide + ATP + H2O = selenophosphate + AMP + phosphate + 2 H(+). Its function is as follows. Synthesizes selenophosphate from selenide and ATP. The polypeptide is Selenide, water dikinase (Geobacter metallireducens (strain ATCC 53774 / DSM 7210 / GS-15)).